The following is a 259-amino-acid chain: Putative protein-tyrosine sulfotransferase (259 aa).

The cysteines at positions 13 and 68 are disulfide-linked. Glu16 functions as the Proton donor/acceptor in the catalytic mechanism. Asn36 carries N-linked (GlcNAc...) asparagine glycosylation. Residues Arg95, Ser103, and Arg107 each contribute to the 3'-phosphoadenylyl sulfate site. Asn115 is a glycosylation site (N-linked (GlcNAc...) asparagine). Cys137 and Cys144 form a disulfide bridge. Residues Tyr149 and 194–203 each bind 3'-phosphoadenylyl sulfate; that span reads SASQVKNSIN.

Belongs to the protein sulfotransferase family.

It catalyses the reaction L-tyrosyl-[protein] + 3'-phosphoadenylyl sulfate = O-sulfo-L-tyrosine-[protein] + adenosine 3',5'-bisphosphate + H(+). Functionally, catalyzes the O-sulfation of tyrosine residues within acidic motifs of polypeptides, using 3'-phosphoadenylyl sulfate (PAPS) as cosubstrate. This Caenorhabditis elegans protein is Putative protein-tyrosine sulfotransferase (tpst-2).